Consider the following 212-residue polypeptide: ATP-dependent Clp protease proteolytic subunit 2 (212 aa).

Residues 1 to 20 (MSHNTSIASQGMPAMAGPET) are disordered. S107 serves as the catalytic Nucleophile. Residue H132 is part of the active site.

It belongs to the peptidase S14 family. In terms of assembly, fourteen ClpP subunits assemble into 2 heptameric rings which stack back to back to give a disk-like structure with a central cavity, resembling the structure of eukaryotic proteasomes.

It localises to the cytoplasm. It catalyses the reaction Hydrolysis of proteins to small peptides in the presence of ATP and magnesium. alpha-casein is the usual test substrate. In the absence of ATP, only oligopeptides shorter than five residues are hydrolyzed (such as succinyl-Leu-Tyr-|-NHMec, and Leu-Tyr-Leu-|-Tyr-Trp, in which cleavage of the -Tyr-|-Leu- and -Tyr-|-Trp bonds also occurs).. Its function is as follows. Cleaves peptides in various proteins in a process that requires ATP hydrolysis. Has a chymotrypsin-like activity. Plays a major role in the degradation of misfolded proteins. This Cutibacterium acnes (strain DSM 16379 / KPA171202) (Propionibacterium acnes) protein is ATP-dependent Clp protease proteolytic subunit 2.